Here is a 495-residue protein sequence, read N- to C-terminus: Averantin hydroxylase (495 aa).

A helical membrane pass occupies residues 12-32; sequence ILLLIVLTVLTPPSLALYRLW. N-linked (GlcNAc...) asparagine glycans are attached at residues Asn-258 and Asn-289. Cys-436 contributes to the heme binding site.

The protein belongs to the cytochrome P450 family. Requires heme as cofactor.

It is found in the membrane. The catalysed reaction is (1'S)-averantin + reduced [NADPH--hemoprotein reductase] + O2 = (1'S,5'R)-5'-hydroxyaverantin + oxidized [NADPH--hemoprotein reductase] + H2O. It carries out the reaction (1'S)-averantin + reduced [NADPH--hemoprotein reductase] + O2 = (1'S,5'S)-5'-hydroxyaverantin + oxidized [NADPH--hemoprotein reductase] + H2O + H(+). It functions in the pathway mycotoxin biosynthesis; aflatoxin biosynthesis. Its function is as follows. Averantin hydroxylase; part of the gene cluster that mediates the biosynthesis of aflatoxins, a group of polyketide-derived furanocoumarins, and part of the most toxic and carcinogenic compounds among the known mycotoxins. The four major aflatoxins produced by A.parasiticus are aflatoxin B1 (AFB1), aflatoxin B2 (AFB2), aflatoxin G1 (AFG1) and aflatoxin G2 (AFG2). Within the aflatoxin pathway, the cytochrome P450 monooxygenase aflG catalyzes the hydroxylation of AVN to 5'hydroxyaverantin (HAVN). The biosynthesis of aflatoxins begins with the norsolorinic acid synthase aflC that combines a hexanoyl starter unit produced by the fatty acid synthase aflA/aflB and 7 malonyl-CoA extender units to synthesize the precursor NOR. The second step is the conversion of NOR to averantin and requires the norsolorinic acid ketoreductase aflD, which catalyzes the dehydration of norsolorinic acid to form (1'S)-averantin. The norsolorinic acid reductases aflE and aflF may also play a role in the conversion of NOR to AVN. The cytochrome P450 monooxygenase aflG then catalyzes the hydroxylation of AVN to 5'hydroxyaverantin (HAVN). The next step is performed by the 5'-hydroxyaverantin dehydrogenase aflH that transforms HAVN to 5'-oxoaverantin (OAVN) which is further converted to averufin (AVF) by aflK that plays a dual role in the pathway, as a 5'-oxoaverantin cyclase that mediates conversion of 5'-oxoaverantin, as well as a versicolorin B synthase in a later step in the pathway. The averufin oxidase aflI catalyzes the conversion of AVF to versiconal hemiacetal acetate (VHA). VHA is then the substrate for the versiconal hemiacetal acetate esterase aflJ to yield versiconal (VAL). Versicolorin B synthase aflK then converts VAL to versicolorin B (VERB) by closing the bisfuran ring of aflatoxin which is required for DNA-binding, thus giving to aflatoxin its activity as a mutagen. Then, the activity of the versicolorin B desaturase aflL leads to versicolorin A (VERA). A branch point starts from VERB since it can also be converted to dihydrodemethylsterigmatocystin (DMDHST), probably also by aflL, VERA being a precursor for aflatoxins B1 and G1, and DMDHST for aflatoxins B2 and G2. Next, the versicolorin reductase aflM and the cytochrome P450 monooxygenase aflN are involved in conversion of VERA to demethylsterigmatocystin (DMST). AflX and aflY seem also involved in this step, through probable aflX-mediated epoxide ring-opening step following versicolorin A oxidation and aflY-mediated Baeyer-Villiger oxidation required for the formation of the xanthone ring. The methyltransferase aflO then leads to the modification of DMST to sterigmatocystin (ST), and of DMDHST to dihydrosterigmatocystin (DHST). Both ST and DHST are then substrates of the O-methyltransferase aflP to yield O-methylsterigmatocystin (OMST) and dihydro-O-methylsterigmatocystin (DHOMST), respectively. Finally OMST is converted to aflatoxins B1 and G1, and DHOMST to aflatoxins B2 and G2, via the action of several enzymes including O-methylsterigmatocystin oxidoreductase aflQ, the cytochrome P450 monooxygenase aflU, but also the NADH-dependent flavin oxidoreductase nadA which is specifically required for the synthesis of AFG1. In Aspergillus parasiticus (strain ATCC 56775 / NRRL 5862 / SRRC 143 / SU-1), this protein is Averantin hydroxylase.